We begin with the raw amino-acid sequence, 59 residues long: Small integral membrane protein 30 (59 aa).

A signal peptide spans methionine 1 to alanine 24. Over valine 25–aspartate 29 the chain is Extracellular. A helical transmembrane segment spans residues alanine 30–isoleucine 50. The Cytoplasmic portion of the chain corresponds to tyrosine 51–methionine 59.

In terms of assembly, interacts (via transmembrane domain) with antiviral protein MAVS (via transmembrane domain); the interaction disrupts MAVS interaction with RIGI and inhibits MAVS aggregation, resulting in the repression of type I interferon signaling and innate immune responses.

It is found in the endoplasmic reticulum membrane. It localises to the mitochondrion membrane. Negatively regulates antiviral innate immune responses. Disrupts the interaction of antiviral protein MAVS with innate immune receptor RIGI and inhibits MAVS aggregation, resulting in the repression of type I interferon signaling and innate immune responses. This Mus musculus (Mouse) protein is Small integral membrane protein 30.